Here is a 138-residue protein sequence, read N- to C-terminus: Lutropin subunit beta (138 aa).

An N-terminal signal peptide occupies residues 1 to 17 (LQGLLLWLLLSVGGVWA). Cystine bridges form between Cys-26-Cys-74, Cys-40-Cys-89, Cys-43-Cys-127, Cys-51-Cys-105, Cys-55-Cys-107, and Cys-110-Cys-117. An N-linked (GlcNAc...) asparagine glycan is attached at Asn-30.

The protein belongs to the glycoprotein hormones subunit beta family. Heterodimer of a common alpha chain and a unique beta chain which confers biological specificity to thyrotropin, lutropin, follitropin and gonadotropin.

The protein resides in the secreted. Its function is as follows. Promotes spermatogenesis and ovulation by stimulating the testes and ovaries to synthesize steroids. The chain is Lutropin subunit beta (LHB) from Canis lupus familiaris (Dog).